The chain runs to 336 residues: Glyceraldehyde-3-phosphate dehydrogenase, plasmid (336 aa).

NAD(+)-binding positions include 12–13, Asp37, Arg81, and Ser123; that span reads RI. Residues 154 to 156 and Thr185 each bind D-glyceraldehyde 3-phosphate; that span reads SCT. Residue Cys155 is the Nucleophile of the active site. Position 186 (Asn186) interacts with NAD(+). Residues Arg200, 213 to 214, and Arg236 each bind D-glyceraldehyde 3-phosphate; that span reads TG. Asn317 is an NAD(+) binding site.

The protein belongs to the glyceraldehyde-3-phosphate dehydrogenase family. In terms of assembly, homotetramer.

The catalysed reaction is D-glyceraldehyde 3-phosphate + phosphate + NAD(+) = (2R)-3-phospho-glyceroyl phosphate + NADH + H(+). It functions in the pathway carbohydrate biosynthesis; Calvin cycle. In terms of biological role, could be involved in carbon fixation as a component of the Calvin cycle. Catalyzes the oxidative phosphorylation of glyceraldehyde 3-phosphate (G3P) to 1,3-bisphosphoglycerate (BPG) using the cofactor NAD. The first reaction step involves the formation of a hemiacetal intermediate between G3P and a cysteine residue, and this hemiacetal intermediate is then oxidized to a thioester, with concomitant reduction of NAD to NADH. The reduced NADH is then exchanged with the second NAD, and the thioester is attacked by a nucleophilic inorganic phosphate to produce BPG. This Cupriavidus necator (strain ATCC 17699 / DSM 428 / KCTC 22496 / NCIMB 10442 / H16 / Stanier 337) (Ralstonia eutropha) protein is Glyceraldehyde-3-phosphate dehydrogenase, plasmid (cbbGP).